The chain runs to 370 residues: Dual-specificity RNA methyltransferase RlmN (370 aa).

The active-site Proton acceptor is the Glu-93. Positions 99–337 constitute a Radical SAM core domain; that stretch reads AEGRGTLCVS…VTTVRKTRGD (239 aa). The cysteines at positions 106 and 343 are disulfide-linked. [4Fe-4S] cluster-binding residues include Cys-113, Cys-117, and Cys-120. S-adenosyl-L-methionine contacts are provided by residues 167 to 168, Ser-199, 221 to 223, and Asn-300; these read GE and SLH. Cys-343 acts as the S-methylcysteine intermediate in catalysis.

The protein belongs to the radical SAM superfamily. RlmN family. Requires [4Fe-4S] cluster as cofactor.

It localises to the cytoplasm. It carries out the reaction adenosine(2503) in 23S rRNA + 2 reduced [2Fe-2S]-[ferredoxin] + 2 S-adenosyl-L-methionine = 2-methyladenosine(2503) in 23S rRNA + 5'-deoxyadenosine + L-methionine + 2 oxidized [2Fe-2S]-[ferredoxin] + S-adenosyl-L-homocysteine. The enzyme catalyses adenosine(37) in tRNA + 2 reduced [2Fe-2S]-[ferredoxin] + 2 S-adenosyl-L-methionine = 2-methyladenosine(37) in tRNA + 5'-deoxyadenosine + L-methionine + 2 oxidized [2Fe-2S]-[ferredoxin] + S-adenosyl-L-homocysteine. Functionally, specifically methylates position 2 of adenine 2503 in 23S rRNA and position 2 of adenine 37 in tRNAs. m2A2503 modification seems to play a crucial role in the proofreading step occurring at the peptidyl transferase center and thus would serve to optimize ribosomal fidelity. In Francisella tularensis subsp. tularensis (strain FSC 198), this protein is Dual-specificity RNA methyltransferase RlmN.